We begin with the raw amino-acid sequence, 103 residues long: Large ribosomal subunit protein bL21 (103 aa).

The protein belongs to the bacterial ribosomal protein bL21 family. In terms of assembly, part of the 50S ribosomal subunit. Contacts protein L20.

In terms of biological role, this protein binds to 23S rRNA in the presence of protein L20. This Thiobacillus denitrificans (strain ATCC 25259 / T1) protein is Large ribosomal subunit protein bL21.